Here is a 417-residue protein sequence, read N- to C-terminus: Lissencephaly-1 homolog (417 aa).

Positions Q7 to L39 constitute a LisH domain. A coiled-coil region spans residues T52–R80. The tract at residues E72–R93 is disordered. WD repeat units lie at residues G102–K143, G144–H185, G186–T225, G228–T267, E270–T339, G342–N383, and A385–G417.

This sequence belongs to the WD repeat LIS1/nudF family.

It localises to the cytoplasm. The protein localises to the cytoskeleton. The protein resides in the microtubule organizing center. Its subcellular location is the centrosome. In terms of biological role, positively regulates the activity of the minus-end directed microtubule motor protein dynein. May enhance dynein-mediated microtubule sliding by targeting dynein to the microtubule plus end. Required for several dynein- and microtubule-dependent processes. This Heterostelium pallidum (strain ATCC 26659 / Pp 5 / PN500) (Cellular slime mold) protein is Lissencephaly-1 homolog.